We begin with the raw amino-acid sequence, 291 residues long: Undecaprenyl-diphosphatase (291 aa).

8 consecutive transmembrane segments (helical) span residues 1–21 (MLILELIKGIILGIVEGLTEF), 48–68 (SAFTFKIVIQLGSVFAGAWVF), 99–119 (LHIIVGMIPAGVLGLLFDDVI), 123–143 (LFSVPTVMIGLFIGAIYMIIA), 159–179 (INYFQAFVIGLSQAIAMWPGF), 200–220 (SDFTFIMAVPVMLAASGLSLV), 236–256 (LGFLAAFIVGLIAIKTFLYLI), and 269–289 (IVLVIIIAILYFGFGIGQGIT).

It belongs to the UppP family.

It is found in the cell membrane. It carries out the reaction di-trans,octa-cis-undecaprenyl diphosphate + H2O = di-trans,octa-cis-undecaprenyl phosphate + phosphate + H(+). Catalyzes the dephosphorylation of undecaprenyl diphosphate (UPP). Confers resistance to bacitracin. The protein is Undecaprenyl-diphosphatase of Staphylococcus saprophyticus subsp. saprophyticus (strain ATCC 15305 / DSM 20229 / NCIMB 8711 / NCTC 7292 / S-41).